A 574-amino-acid chain; its full sequence is Arginine--tRNA ligase (574 aa).

The 'HIGH' region signature appears at 126–136 (PNIAKRMHVGH).

This sequence belongs to the class-I aminoacyl-tRNA synthetase family. Monomer.

It localises to the cytoplasm. The catalysed reaction is tRNA(Arg) + L-arginine + ATP = L-arginyl-tRNA(Arg) + AMP + diphosphate. This Chloroflexus aurantiacus (strain ATCC 29366 / DSM 635 / J-10-fl) protein is Arginine--tRNA ligase.